The following is a 144-amino-acid chain: MLTITSIKDGIVIDHIKSGYGIKIFNYLNLKNVEYSVALIMNVFSSKLGKKDIIKIANKEIDIDFTVLGLIDPTITINIIEDEKIKEKLNLELPKKVEDVIRCKNPRCITSIEKYIPHVFYLIDKEKVEYKCKYCDEIYKVVEE.

Cys103, Cys108, Cys132, and Cys135 together coordinate Zn(2+).

This sequence belongs to the PyrI family. In terms of assembly, contains catalytic and regulatory chains. Requires Zn(2+) as cofactor.

In terms of biological role, involved in allosteric regulation of aspartate carbamoyltransferase. The chain is Aspartate carbamoyltransferase regulatory chain from Clostridium tetani (strain Massachusetts / E88).